Consider the following 145-residue polypeptide: Photosystem I reaction center subunit XI (145 aa).

A run of 3 helical transmembrane segments spans residues Leu-48–Leu-68, Leu-75–Ile-95, and Ile-125–Ala-145.

The protein belongs to the PsaL family.

It is found in the plastid. It localises to the chloroplast thylakoid membrane. The polypeptide is Photosystem I reaction center subunit XI (Isochrysis galbana (Marine planktonic alga)).